Here is a 412-residue protein sequence, read N- to C-terminus: Serine hydroxymethyltransferase (412 aa).

Residues L117 and 121-123 (GHL) contribute to the (6S)-5,6,7,8-tetrahydrofolate site. K226 is subject to N6-(pyridoxal phosphate)lysine.

It belongs to the SHMT family. As to quaternary structure, homodimer. It depends on pyridoxal 5'-phosphate as a cofactor.

Its subcellular location is the cytoplasm. The catalysed reaction is (6R)-5,10-methylene-5,6,7,8-tetrahydrofolate + glycine + H2O = (6S)-5,6,7,8-tetrahydrofolate + L-serine. The protein operates within one-carbon metabolism; tetrahydrofolate interconversion. It functions in the pathway amino-acid biosynthesis; glycine biosynthesis; glycine from L-serine: step 1/1. In terms of biological role, catalyzes the reversible interconversion of serine and glycine with tetrahydrofolate (THF) serving as the one-carbon carrier. This reaction serves as the major source of one-carbon groups required for the biosynthesis of purines, thymidylate, methionine, and other important biomolecules. Also exhibits THF-independent aldolase activity toward beta-hydroxyamino acids, producing glycine and aldehydes, via a retro-aldol mechanism. This Staphylococcus haemolyticus (strain JCSC1435) protein is Serine hydroxymethyltransferase.